A 218-amino-acid chain; its full sequence is 3-dehydroquinate dehydratase (218 aa).

3-dehydroquinate-binding positions include Glu-29 to Arg-31 and Arg-56. His-116 functions as the Proton donor/acceptor in the catalytic mechanism. Residue Lys-142 is the Schiff-base intermediate with substrate of the active site. Arg-180, Ser-200, and Gln-204 together coordinate 3-dehydroquinate.

It belongs to the type-I 3-dehydroquinase family. As to quaternary structure, homodimer.

The catalysed reaction is 3-dehydroquinate = 3-dehydroshikimate + H2O. It functions in the pathway metabolic intermediate biosynthesis; chorismate biosynthesis; chorismate from D-erythrose 4-phosphate and phosphoenolpyruvate: step 3/7. Functionally, involved in the third step of the chorismate pathway, which leads to the biosynthesis of aromatic amino acids. Catalyzes the cis-dehydration of 3-dehydroquinate (DHQ) and introduces the first double bond of the aromatic ring to yield 3-dehydroshikimate. This is 3-dehydroquinate dehydratase from Methanococcus maripaludis (strain C7 / ATCC BAA-1331).